Reading from the N-terminus, the 429-residue chain is Glutamate-1-semialdehyde 2,1-aminomutase 1 (429 aa).

K267 is modified (N6-(pyridoxal phosphate)lysine).

This sequence belongs to the class-III pyridoxal-phosphate-dependent aminotransferase family. HemL subfamily. Homodimer. The cofactor is pyridoxal 5'-phosphate.

Its subcellular location is the cytoplasm. It catalyses the reaction (S)-4-amino-5-oxopentanoate = 5-aminolevulinate. Its pathway is porphyrin-containing compound metabolism; protoporphyrin-IX biosynthesis; 5-aminolevulinate from L-glutamyl-tRNA(Glu): step 2/2. In Bacillus velezensis (strain DSM 23117 / BGSC 10A6 / LMG 26770 / FZB42) (Bacillus amyloliquefaciens subsp. plantarum), this protein is Glutamate-1-semialdehyde 2,1-aminomutase 1.